Reading from the N-terminus, the 151-residue chain is 3-dehydroquinate dehydratase (151 aa).

Tyrosine 24 acts as the Proton acceptor in catalysis. 3 residues coordinate substrate: asparagine 76, histidine 82, and aspartate 89. Residue histidine 102 is the Proton donor of the active site. Residues 103-104 and arginine 113 contribute to the substrate site; that span reads LS.

Belongs to the type-II 3-dehydroquinase family. Homododecamer.

It catalyses the reaction 3-dehydroquinate = 3-dehydroshikimate + H2O. Its pathway is metabolic intermediate biosynthesis; chorismate biosynthesis; chorismate from D-erythrose 4-phosphate and phosphoenolpyruvate: step 3/7. Its function is as follows. Catalyzes a trans-dehydration via an enolate intermediate. This is 3-dehydroquinate dehydratase from Acinetobacter baumannii (strain AB307-0294).